A 247-amino-acid chain; its full sequence is ATP synthase subunit a, chloroplastic (247 aa).

A run of 5 helical transmembrane segments spans residues 38–58, 95–115, 134–154, 199–219, and 220–240; these read QVLI…TLAV, VPFI…GALL, INTT…AGLS, LVVV…VMFL, and GLFT…AYIG.

Belongs to the ATPase A chain family. F-type ATPases have 2 components, CF(1) - the catalytic core - and CF(0) - the membrane proton channel. CF(1) has five subunits: alpha(3), beta(3), gamma(1), delta(1), epsilon(1). CF(0) has four main subunits: a, b, b' and c.

It is found in the plastid. The protein localises to the chloroplast thylakoid membrane. In terms of biological role, key component of the proton channel; it plays a direct role in the translocation of protons across the membrane. This chain is ATP synthase subunit a, chloroplastic, found in Lemna minor (Common duckweed).